A 549-amino-acid chain; its full sequence is Glucose-6-phosphate isomerase (549 aa).

3 positions are modified to N6-acetyllysine: Lys-80, Lys-228, and Lys-234. The active-site Proton donor is the Glu-355. Catalysis depends on residues His-386 and Lys-514.

The protein belongs to the GPI family.

It is found in the cytoplasm. The enzyme catalyses alpha-D-glucose 6-phosphate = beta-D-fructose 6-phosphate. Its pathway is carbohydrate biosynthesis; gluconeogenesis. It functions in the pathway carbohydrate degradation; glycolysis; D-glyceraldehyde 3-phosphate and glycerone phosphate from D-glucose: step 2/4. In terms of biological role, catalyzes the reversible isomerization of glucose-6-phosphate to fructose-6-phosphate. This Escherichia coli (strain SE11) protein is Glucose-6-phosphate isomerase.